The sequence spans 356 residues: DNA-directed RNA polymerase subunit alpha (356 aa).

Positions 1–230 (MNLHRISSEP…DLLKPLLKVE (230 aa)) are alpha N-terminal domain (alpha-NTD). Residues 267–356 (IDQPLLPADS…IRKSYGHILG (90 aa)) are alpha C-terminal domain (alpha-CTD).

This sequence belongs to the RNA polymerase alpha chain family. In plastids the minimal PEP RNA polymerase catalytic core is composed of four subunits: alpha, beta, beta', and beta''. When a (nuclear-encoded) sigma factor is associated with the core the holoenzyme is formed, which can initiate transcription.

It is found in the plastid. It localises to the chloroplast. The catalysed reaction is RNA(n) + a ribonucleoside 5'-triphosphate = RNA(n+1) + diphosphate. In terms of biological role, DNA-dependent RNA polymerase catalyzes the transcription of DNA into RNA using the four ribonucleoside triphosphates as substrates. This Zygnema circumcarinatum (Green alga) protein is DNA-directed RNA polymerase subunit alpha.